The sequence spans 100 residues: uncharacterized protein (100 aa).

Lysine 98 participates in a covalent cross-link: Isoglutamyl lysine isopeptide (Lys-Gln) (interchain with Q-Cter in protein Pup).

This is an uncharacterized protein from Mycobacterium tuberculosis (strain CDC 1551 / Oshkosh).